Consider the following 3712-residue polypeptide: MGHGVASIGALLVILAISYCQAELTPPYFNLATGRKIYATATCGQDTDGPELYCKLVGANTEHDHIDYSVIQGQVCDYCDPTVPERNHPPENAIDGTEAWWQSPPLSRGMKFNEVNLTINFEQEFHVAYLFIRMGNSPRPGLWTLEKSTDYGKTWTPWQHFSDTPADCETYFGKDTYKPITRDDDVICTTEYSKIVPLENGEIPVMLLNERPSSTNYFNSTVLQEWTRATNVRIRLLRTKNLLGHLMSVARQDPTVTRRYFYSIKDISIGGRCMCNGHADTCDVKDPKSPVRILACRCQHHTCGIQCNECCPGFEQKKWRQNTNARPFNCEPCNCHGHSNECKYDEEVNRKGLSLDIHGHYDGGGVCQNCQHNTVGINCNKCKPKYYRPKGKHWNETDVCSPCQCDYFFSTGHCEEETGNCECRAAFQPPSCDSCAYGYYGYPNCRECECNLNGTNGYHCEAESGQQCPCKINFAGAYCKQCAEGYYGFPECKACECNKIGSITNDCNVTTGECKCLTNFGGDNCERCKHGYFNYPTCSYCDCDNQGTESEICNKQSGQCICREGFGGPRCDQCLPGFYNYPDCKPCNCSSTGSSAITCDNTGKCNCLNNFAGKQCTLCTAGYYSYPDCLPCHCDSHGSQGVSCNSDGQCLCQPNFDGRQCDSCKEGFYNFPSCEDCNCDPAGVIDKFAGCGSVPVGELCKCKERVTGRICNECKPLYWNLNISNTEGCEICDCWTDGTISALDTCTSKSGQCPCKPHTQGRRCQECRDGTFDLDSASLFGCKDCSCDVGGSWQSVCDKISGQCKCHPRITGLACTQPLTTHFFPTLHQFQYEYEDGSLPSGTQVRYDYDEAAFPGFSSKGYVVFNAIQNDVRNEVNVFKSSLYRIVLRYVNPNAENVTATISVTSDNPLEVDQHVKVLLQPTSEPQFVTVAGPLGVKPSAIVLDPGRYVFTTKANKNVMLDYFVLLPAAYYEAGILTRHISNPCELGNMELCRHYKYASVEVFSPAATPFVIGENSKPTNPVETYTDPEHLQIVSHVGDIPVLSGSQNELHYIVDVPRSGRYIFVIDYISDRNFPDSYYINLKLKDNPDSETSVLLYPCLYSTICRTSVNEDGMEKSFYINKEDLQPVIISADIEDGSRFPIISVTAIPVDQWSIDYINPSPVCVIHDQQCATPKFRSVPDSKKIEFETDHEDRIATNKPPYASLDERVKLVHLDSQNEATIVIESKVDATKPNLFVILVKYYQPSHPKYQVYYTLTAGKNQYDGKFDIQHCPSSSGCRGVIRPAGEGSFEIDDEFKFTITTDRSQSVWLDYLVVVPLKQYNDDLLVEETFDQTKEFIQNCGHDHFHITHNASDFCKKSVFSLTADYNSGALPCNCDYAGSTSFECHPFGGQCQCKPNVIERTCGACRSRYYGFPDCKPCKCPNSAMCEPTTGECMCPPNVIGDLCEKCAPNTYGFHQVIGCEECACNPMGIANGNSQCDLFNGTCECRQNIEGRACDVCSNGYFNFPHCEQCSCHKPGTELEVCDKIDGACFCKKNVVGRDCDQCVDGTYNLQESNPDGCTTCFCFGKTSRCDSAYLRVYNVSLLKHVSITTPEFHEESIKFDMWPVPADEILLNETTLKADFTLREVNDERPAYFGVLDYLLNQNNHISAYGGDLAYTLHFTSGFDGKYIVAPDVILFSEHNALVHTSYEQPSRNEPFTNRVNIVESNFQTISGKPVSRADFMMVLRDLKVIFIRANYWEQTLVTHLSDVYLTLADEDADGTGEYQFLAVERCSCPPGYSGHSCEDCAPGYYRDPSGPYGGYCIPCECNGHSETCDCATGICSKCQHGTEGDHCERCVSGYYGNATNGTPGDCMICACPLPFDSNNFATSCEISESGDQIHCECKPGYTGPRCESCANGFYGEPESIGQVCKPCECSGNINPEDQGSCDTRTGECLRCLNNTFGAACNLCAPGFYGDAIKLKNCQSCDCDDLGTQTCDPFVGVCTCHENVIGDRCDRCKPDHYGFESGVGCRACDCGAASNSTQCDPHTGHCACKSGVTGRQCDRCAVDHWKYEKDGCTPCNCNQGYSRGFGCNPNTGKCQCLPGVIGDRCDACPNRWVLIKDEGCQECNNCHHALLDVTDRMRYQIDSVLEDFNSVTLAFFTSQKLNYYDQLADELEPKVKLLDPNSVDLSPSKKANSELESDAKSYAKQVNQTLANAFDIRERSSTTLGNITVAYDEAVKSADQAKEAIASVEALSKNLEAAASTKIDAALEQAQHILGQINGTSIELTPNEQVLEKARKLYEEVNTLVLPIKAQNKSLNALKNDIGEFSDHLEDLFNWSEASQAKSADVERRNVANQKAFDNSKFDTVSEQKLQAEKNIKDAGNFLINGDLTLNQINQKLDNLRDALNELNSFNKNVDEELPVREDQHKEADALTDQAEQKAAELAIKAQDLAAQYTDMTASAEPAIKAATAYSGIVEAVEAAQKLSQDAISAAGNATDKTDGIEERAHLADTGSTDLLQRARQSLQKVQDDLEPRLNASAGKVQKISAVNNATEHQLKDINKLIDQLPAESQRDMWKNSNANASDALEILKNVLEILEPVSVQTPKELEKAHGINRDLDLTNKDVSQANKQLDDVEGSVSKLNELAEDIEEQQHRVGSQSRQLGQEIENLKAQVEAARQLANSIKVGVNFKPSTILELKTPEKTKLLATRTNLSTYFRTTEPSGFLLYLGNDNKTAQKNNDFVAVEIVNGYPILTIDLGNGPERITSDKYVADGRWYQAVVDRMGPNAKLTIREELPNGDVVEHSKSGYLEGSQNILHVDKNSRLFVGGYPGISDFNAPPDLTTNSFSGDIEDLKIGDESVGLWNFVYGDDNDQGARERDVLLEKKKPVTGLRFKGNGYVQLNATSNLKSRSSIQFSFKADKDTSNGLLFFYGRDKHYMSIEMIDGAIFFNISLGEGGGVQSGSQDRYNDNQWHKVQAERENRNGLLKVDDIVISRTNAPLEADLELPKLRRLYFGGHPRRLNTSISLQPNFDGCIDNVVINQGVVDLTEYVTGGGVEEGCSAKFSTVVSYAPHEYGFLRMNNVSSDNNLHVVLHFKTTQPNGVLFYAANHDQSSTIGLSLQDGLLKLNSMGSQLVIDDRILNDGEDHVVTVQHTQGELRLTVDDVDNKRLGSPQPLILEGGDIFFAGLPDNYRTPRNALASLAYFVGCISDVTVNEEIINFANSAEKKNGNINGCPPHVLAYEPSLVPSYYPSGDNEVESPWSNADTLPPLKPDIESTLPPTTPTTTTTTTTTTTSTTTTSTTTTTTTPSPIVIDEEKEIEAKTPQKILTTRPPAKLNLPSDERCKLPEQPNFDVDFTEAGYRFYGLREQRLQINSLPVKVRRHHDIGISFRTERPNGLLIYAGSKQRDDFIAVYLLDGRVTYEIRVGAQLQAKITTEAELNDGTWHTVEVVRTQRKVSLLIDKLEQPGSVDLNAERSAPVLAVELPIYLGGVNKFLESEVKNLTDFKTEVPYFNGCLKNIKFDAMDLETPPEEFGVVPCSEQVERGLFFNNQKAFVKIFDHFDVGTEMKISFDFRPRDPNGLLFSVHGKNSYAILELVDNTLYFTVKTDLKNIVSTNYKLPNNESFCDGKTRNVQAIKSKFVINIAVDFISSNPGVGNEGSVITRTNRPLFLGGHVAFQRAPGIKTKKSFKGCISKVEVNQRMINITPNMVVGDIWQGYCPLN.

An N-terminal signal peptide occupies residues 1–22 (MGHGVASIGALLVILAISYCQA). The 250-residue stretch at 23 to 272 (ELTPPYFNLA…SIKDISIGGR (250 aa)) folds into the Laminin N-terminal domain. N-linked (GlcNAc...) asparagine glycosylation is found at asparagine 116 and asparagine 219. 43 cysteine pairs are disulfide-bonded: cysteine 273–cysteine 282, cysteine 275–cysteine 296, cysteine 298–cysteine 307, cysteine 310–cysteine 330, cysteine 333–cysteine 342, cysteine 335–cysteine 367, cysteine 370–cysteine 379, cysteine 382–cysteine 400, cysteine 403–cysteine 414, cysteine 405–cysteine 421, cysteine 423–cysteine 432, cysteine 435–cysteine 445, cysteine 448–cysteine 460, cysteine 450–cysteine 468, cysteine 470–cysteine 479, cysteine 482–cysteine 492, cysteine 495–cysteine 507, cysteine 497–cysteine 514, cysteine 516–cysteine 525, cysteine 528–cysteine 538, cysteine 541–cysteine 553, cysteine 543–cysteine 560, cysteine 562–cysteine 571, cysteine 574–cysteine 584, cysteine 587–cysteine 599, cysteine 589–cysteine 605, cysteine 607–cysteine 616, cysteine 619–cysteine 629, cysteine 632–cysteine 644, cysteine 634–cysteine 650, cysteine 652–cysteine 661, cysteine 664–cysteine 674, cysteine 677–cysteine 691, cysteine 679–cysteine 700, cysteine 702–cysteine 711, cysteine 714–cysteine 729, cysteine 732–cysteine 746, cysteine 734–cysteine 753, cysteine 755–cysteine 764, cysteine 767–cysteine 782, cysteine 785–cysteine 797, cysteine 787–cysteine 804, and cysteine 806–cysteine 815. 10 consecutive Laminin EGF-like domains span residues 273-332 (CMCN…NCEP), 333-402 (CNCH…VCSP), 403-447 (CQCD…NCRE), 448-494 (CECN…ECKA), 495-540 (CECN…TCSY), 541-586 (CDCD…DCKP), 587-631 (CNCS…DCLP), 632-676 (CHCD…SCED), 677-731 (CNCD…GCEI), and 732-784 (CDCW…GCKD). N-linked (GlcNAc...) asparagine glycosylation occurs at asparagine 395. Asparagine 453 carries an N-linked (GlcNAc...) asparagine glycan. Asparagine 508 carries an N-linked (GlcNAc...) asparagine glycan. Asparagine 588 carries an N-linked (GlcNAc...) asparagine glycan. A glycan (N-linked (GlcNAc...) asparagine) is linked at asparagine 722. Residues 785–815 (CSCDVGGSWQSVCDKISGQCKCHPRITGLAC) enclose the Laminin EGF-like 11; truncated domain. The tract at residues 816–1374 (TQPLTTHFFP…TADYNSGALP (559 aa)) is domain IV''. N-linked (GlcNAc...) asparagine glycans are attached at residues asparagine 897 and asparagine 1352. 16 cysteine pairs are disulfide-bonded: cysteine 1375/cysteine 1387, cysteine 1377/cysteine 1394, cysteine 1396/cysteine 1405, cysteine 1408/cysteine 1418, cysteine 1421/cysteine 1429, cysteine 1423/cysteine 1436, cysteine 1438/cysteine 1447, cysteine 1450/cysteine 1463, cysteine 1466/cysteine 1480, cysteine 1468/cysteine 1487, cysteine 1489/cysteine 1498, cysteine 1501/cysteine 1511, cysteine 1514/cysteine 1526, cysteine 1516/cysteine 1533, cysteine 1535/cysteine 1544, and cysteine 1547/cysteine 1562. Laminin EGF-like domains lie at 1375–1420 (CNCD…DCKP), 1421–1465 (CKCP…GCEE), 1466–1513 (CACN…HCEQ), and 1514–1564 (CSCH…GCTT). Residue asparagine 1484 is glycosylated (N-linked (GlcNAc...) asparagine). A Laminin EGF-like 16; first part domain is found at 1565-1574 (CFCFGKTSRC). N-linked (GlcNAc...) asparagine glycans are attached at residues asparagine 1583 and asparagine 1617. The 191-residue stretch at 1585–1775 (SLLKHVSITT…GEYQFLAVER (191 aa)) folds into the Laminin IV type A domain. The Laminin EGF-like 16; second part domain occupies 1776-1808 (CSCPPGYSGHSCEDCAPGYYRDPSGPYGGYCIP). Disulfide bonds link cysteine 1778/cysteine 1787, cysteine 1790/cysteine 1806, cysteine 1809/cysteine 1818, cysteine 1811/cysteine 1825, cysteine 1828/cysteine 1837, cysteine 1840/cysteine 1856, cysteine 1859/cysteine 1874, cysteine 1861/cysteine 1885, cysteine 1887/cysteine 1896, cysteine 1899/cysteine 1914, cysteine 1917/cysteine 1931, cysteine 1919/cysteine 1938, cysteine 1941/cysteine 1950, cysteine 1953/cysteine 1967, cysteine 1970/cysteine 1980, cysteine 1972/cysteine 1987, cysteine 1989/cysteine 1998, cysteine 2001/cysteine 2014, cysteine 2017/cysteine 2028, cysteine 2019/cysteine 2035, cysteine 2037/cysteine 2046, cysteine 2049/cysteine 2061, cysteine 2064/cysteine 2076, cysteine 2066/cysteine 2083, cysteine 2085/cysteine 2094, and cysteine 2097/cysteine 2109. 6 Laminin EGF-like domains span residues 1809–1858 (CECN…DCMI), 1859–1916 (CACP…VCKP), 1917–1969 (CECS…NCQS), 1970–2016 (CDCD…GCRA), 2017–2063 (CDCG…GCTP), and 2064–2111 (CNCN…GCQE). Asparagine 1847 is a glycosylation site (N-linked (GlcNAc...) asparagine). Asparagine 1943 is a glycosylation site (N-linked (GlcNAc...) asparagine). N-linked (GlcNAc...) asparagine glycosylation is present at asparagine 2024. The domain II and I stretch occupies residues 2112–2671 (CNNCHHALLD…EAARQLANSI (560 aa)). Residues 2178–2249 (KKANSELESD…LSKNLEAAAS (72 aa)) adopt a coiled-coil conformation. Asparagine 2196, asparagine 2215, asparagine 2267, asparagine 2301, and asparagine 2323 each carry an N-linked (GlcNAc...) asparagine glycan. The stretch at 2301 to 2321 (NKSLNALKNDIGEFSDHLEDL) forms a coiled coil. The stretch at 2376–2450 (DLTLNQINQK…QYTDMTASAE (75 aa)) forms a coiled coil. N-linked (GlcNAc...) asparagine glycosylation is found at asparagine 2482, asparagine 2524, asparagine 2538, asparagine 2569, asparagine 2699, asparagine 2720, asparagine 2890, asparagine 2938, and asparagine 3010. Residues 2541 to 2676 (EHQLKDINKL…LANSIKVGVN (136 aa)) are a coiled coil. 3 consecutive Laminin G-like domains span residues 2672–2868 (KVGV…ERDV), 2876–3048 (VTGL…EEGC), and 3055–3223 (VVSY…INGC). A disulfide bond links cysteine 3022 and cysteine 3048. An N-linked (GlcNAc...) asparagine glycan is attached at asparagine 3070. Cysteine 3196 and cysteine 3223 are joined by a disulfide. A disordered region spans residues 3244-3297 (NEVESPWSNADTLPPLKPDIESTLPPTTPTTTTTTTTTTTSTTTTSTTTTTTTP). Positions 3265-3297 (STLPPTTPTTTTTTTTTTTSTTTTSTTTTTTTP) are enriched in low complexity. Laminin G-like domains lie at 3349-3528 (GYRF…VVPC) and 3534-3709 (RGLF…QGYC). N-linked (GlcNAc...) asparagine glycosylation occurs at asparagine 3491. Cysteine 3505 and cysteine 3528 are joined by a disulfide. Asparagine 3612 carries N-linked (GlcNAc...) asparagine glycosylation. Cysteine 3682 and cysteine 3709 are disulfide-bonded.

Laminin is a complex glycoprotein, consisting of three different polypeptide chains (alpha, beta, gamma), which are bound to each other by disulfide bonds into a cross-shaped molecule comprising one long and three short arms with globules at each end. In terms of tissue distribution, newly formed mesoderm and later prominently expressed in hemocytes, which also synthesize collagen IV. Expressed in muscles.

It localises to the secreted. The protein localises to the extracellular space. The protein resides in the extracellular matrix. It is found in the basement membrane. Its subcellular location is the synapse. It localises to the cell projection. The protein localises to the axon. The protein resides in the cytoplasmic vesicle. It is found in the secretory vesicle. Its subcellular location is the synaptic vesicle. Its function is as follows. Binding to cells via a high affinity receptor, laminin is thought to mediate the attachment, migration and organization of cells into tissues during embryonic development by interacting with other extracellular matrix components. Activates presynaptic signaling involving integrin alpha-PS3/beta-nu and Fak to suppress neuromuscular junction (NMJ) growth during larval development and during low crawling activity, but not during higher-crawling conditions. Mediates, together with integrin alpha-PS3/beta-nu, glutamate receptor-modulated NMJ growth. The protein is Laminin subunit alpha (LanA) of Drosophila melanogaster (Fruit fly).